The chain runs to 252 residues: Protein lin-28 homolog B (252 aa).

Positions 1–30 (MAEGGAARGTREEQGKLPEQEEEEEEDPQV) are disordered. Positions 9-19 (GTREEQGKLPE) are enriched in basic and acidic residues. The 74-residue stretch at 32–105 (LGSGHCKWFN…GFESLRVTGP (74 aa)) folds into the CSD domain. 2 CCHC-type zinc fingers span residues 130 to 147 (DRCYNCGGLDHHAKECNL) and 152 to 169 (KKCHYCQSTMHMVANCPH). Zn(2+) contacts are provided by cysteine 132, cysteine 135, histidine 140, cysteine 145, cysteine 154, cysteine 157, histidine 162, and cysteine 167. A disordered region spans residues 172–252 (VPQHPTTSQG…KGPSVQKKKK (81 aa)). Positions 213 to 222 (GRSELSERSS) are enriched in basic and acidic residues. The segment covering 225–238 (PQEASLSKISTSPE) has biased composition (polar residues).

It belongs to the lin-28 family.

It is found in the nucleus. Its subcellular location is the nucleolus. In terms of biological role, suppressor of specific microRNA (miRNA) biogenesis. Binds target primary miRNA transcripts and sequester them in the nucleolus, away from the microprocessor complex, hence preventing their processing into mature miRNA. The specific interaction with target pri-miRNAs occurs via an 5'-GGAG-3' motif in the pre-miRNA terminal loop. This is Protein lin-28 homolog B (lin28b) from Xenopus laevis (African clawed frog).